The sequence spans 327 residues: Cobalamin biosynthesis protein CobD (327 aa).

Transmembrane regions (helical) follow at residues M61–I78, S80–A102, G160–I182, and A300–V322.

This sequence belongs to the CobD/CbiB family.

Its subcellular location is the cell membrane. It participates in cofactor biosynthesis; adenosylcobalamin biosynthesis. Functionally, converts cobyric acid to cobinamide by the addition of aminopropanol on the F carboxylic group. The sequence is that of Cobalamin biosynthesis protein CobD from Brucella suis biovar 1 (strain 1330).